The sequence spans 885 residues: DNA mismatch repair protein MutS (885 aa).

640–647 (GPNMGGKS) lines the ATP pocket.

The protein belongs to the DNA mismatch repair MutS family.

This protein is involved in the repair of mismatches in DNA. It is possible that it carries out the mismatch recognition step. This protein has a weak ATPase activity. This chain is DNA mismatch repair protein MutS, found in Variovorax paradoxus (strain S110).